The following is a 284-amino-acid chain: Tropomyosin (284 aa).

A coiled-coil region spans residues 1-284 (MDAIKKKMQA…DMTFTELIGN (284 aa)).

Belongs to the tropomyosin family. Homodimer.

In terms of biological role, tropomyosin, in association with the troponin complex, plays a central role in the calcium dependent regulation of muscle contraction. This Blattella germanica (German cockroach) protein is Tropomyosin.